A 348-amino-acid chain; its full sequence is F(420)H(2) dehydrogenase subunit H (348 aa).

A run of 8 helical transmembrane segments spans residues 20–40 (GVVG…AVWL), 93–113 (IFMM…AVFI), 127–147 (ISVL…FMIA), 172–192 (PLGI…IVEI), 198–218 (LLWN…ALMA), 259–279 (ILGS…PAFV), 286–306 (GLIA…MTII), and 328–348 (LLPL…YLGA).

This sequence belongs to the complex I subunit 1 family. In terms of assembly, the FPO complex is composed of at least 13 different subunits. FpoA, FpoH, FpoJ, FpoK, FpoL, FpoM and FpoN proteins constitute the membrane sector of the complex.

The protein localises to the cell membrane. The enzyme catalyses methanophenazine + reduced coenzyme F420-(gamma-L-Glu)(n) = dihydromethanophenazine + oxidized coenzyme F420-(gamma-L-Glu)(n) + H(+). In terms of biological role, component of the F(420)H(2) dehydrogenase (FPO complex) which is part of the energy-conserving F(420)H(2):heterodisulfide oxidoreductase system. The membrane-bound electron transfer system of the complex plays an important role in the metabolism of methylotrophic methanogens when the organisms grow on methanol or methylamines. Catalyzes the oxidation of methanophenazine to dihydromethanophenazine. It shuttles electrons from F(420)H(2), via FAD and iron-sulfur (Fe-S) centers, to methanophenazine (an electron carrier in the membrane). It couples the redox reaction to proton translocation (for every two electrons transferred, two hydrogen ions are translocated across the cytoplasmic membrane), and thus conserves the redox energy in a proton gradient. This Methanosarcina acetivorans (strain ATCC 35395 / DSM 2834 / JCM 12185 / C2A) protein is F(420)H(2) dehydrogenase subunit H.